A 496-amino-acid polypeptide reads, in one-letter code: UDP-N-acetylmuramoyl-L-alanyl-D-glutamate--2,6-diaminopimelate ligase (496 aa).

Ser-32 is a UDP-N-acetyl-alpha-D-muramoyl-L-alanyl-D-glutamate binding site. Residue 116 to 122 coordinates ATP; sequence GTNGKTT. UDP-N-acetyl-alpha-D-muramoyl-L-alanyl-D-glutamate-binding positions include 158–159, Ser-185, Gln-191, and Arg-193; that span reads TT. At Lys-225 the chain carries N6-carboxylysine. Residues Arg-389, 413 to 416, Gly-464, and Glu-468 each bind meso-2,6-diaminopimelate; that span reads DNPR. A Meso-diaminopimelate recognition motif motif is present at residues 413-416; that stretch reads DNPR.

The protein belongs to the MurCDEF family. MurE subfamily. Mg(2+) is required as a cofactor. Post-translationally, carboxylation is probably crucial for Mg(2+) binding and, consequently, for the gamma-phosphate positioning of ATP.

The protein resides in the cytoplasm. The catalysed reaction is UDP-N-acetyl-alpha-D-muramoyl-L-alanyl-D-glutamate + meso-2,6-diaminopimelate + ATP = UDP-N-acetyl-alpha-D-muramoyl-L-alanyl-gamma-D-glutamyl-meso-2,6-diaminopimelate + ADP + phosphate + H(+). It functions in the pathway cell wall biogenesis; peptidoglycan biosynthesis. Functionally, catalyzes the addition of meso-diaminopimelic acid to the nucleotide precursor UDP-N-acetylmuramoyl-L-alanyl-D-glutamate (UMAG) in the biosynthesis of bacterial cell-wall peptidoglycan. The polypeptide is UDP-N-acetylmuramoyl-L-alanyl-D-glutamate--2,6-diaminopimelate ligase (Trichormus variabilis (strain ATCC 29413 / PCC 7937) (Anabaena variabilis)).